The primary structure comprises 268 residues: tRNA pseudouridine synthase A (268 aa).

Asp-52 (nucleophile) is an active-site residue. Tyr-110 contacts substrate.

It belongs to the tRNA pseudouridine synthase TruA family. As to quaternary structure, homodimer.

The enzyme catalyses uridine(38/39/40) in tRNA = pseudouridine(38/39/40) in tRNA. Functionally, formation of pseudouridine at positions 38, 39 and 40 in the anticodon stem and loop of transfer RNAs. This Prochlorococcus marinus (strain AS9601) protein is tRNA pseudouridine synthase A.